Here is a 427-residue protein sequence, read N- to C-terminus: Terminal nucleotidyltransferase 5B (427 aa).

A disordered region spans residues 1–49 (MMPSESGAESLEQPAAQVGTGAASAVATAGAAGGGPDPEASSASLGRHQ). The segment covering 15 to 30 (AAQVGTGAASAVATAG) has biased composition (low complexity).

Belongs to the TENT family.

It is found in the cytoplasm. It localises to the nucleus. It carries out the reaction RNA(n) + ATP = RNA(n)-3'-adenine ribonucleotide + diphosphate. Catalyzes the transfer of one adenosine molecule from an ATP to an mRNA poly(A) tail bearing a 3'-OH terminal group in an ATP hydrolysis-dependent manner. May be involved in maintaining the translation efficiency of at least some genes through preventing degradation of their mRNAs. Prefers RNA molecules that are adenosine-rich close to 3'-end. In addition, may inhibit cell proliferation and cell cycle progression through ubiquitination of beta-catenin/CTNNB1. The protein is Terminal nucleotidyltransferase 5B of Mus musculus (Mouse).